The sequence spans 400 residues: MGKANKVVLAYSGGVDTSVCIPYLKEEYGVEHVIAFAADLGQGDELDEIKKKAISAGASQSLIGNLVKPFIEDFAFPAIRSNALYQGRYPLSTALARPLIAKKLVEIARELNADGVAHGCTGKGNDQVRFDVTIGALAPDLQLLTPAREWGMSREETIAYGEKYGIVPPVSKKNPYSIDLNLLGRSIEAGPLEDPFQMPSEEVFGITSSIADSPNEPEIADILFENGYPVAINGEEMEPVSLIKKANSLAGKHGFGRLDIIEDRVVGIKSREIYETPGLLLLIKAHQEIESLTLPADLLDTKSRLERQWADLVYKGFWFSPLKEALDGFINYSQKQVNGTVRVRLFKGNVDVIGRKSKENSLYISDMSTYGSEDKFNHKSAEGFIYVWGLPSRIWSWINK.

ATP is bound by residues 10-18 and Ala38; that span reads AYSGGVDTS. Tyr89 provides a ligand contact to L-citrulline. Gly119 is an ATP binding site. Residues Thr121, Asn125, and Asp126 each coordinate L-aspartate. Asn125 is an L-citrulline binding site. L-citrulline contacts are provided by Arg129, Ser177, Ser186, Glu262, and Tyr274.

Belongs to the argininosuccinate synthase family. Type 1 subfamily. Homotetramer.

The protein localises to the cytoplasm. The enzyme catalyses L-citrulline + L-aspartate + ATP = 2-(N(omega)-L-arginino)succinate + AMP + diphosphate + H(+). It participates in amino-acid biosynthesis; L-arginine biosynthesis; L-arginine from L-ornithine and carbamoyl phosphate: step 2/3. The protein is Argininosuccinate synthase of Prochlorococcus marinus (strain NATL2A).